The following is a 188-amino-acid chain: Elongation factor P (188 aa).

It belongs to the elongation factor P family.

The protein localises to the cytoplasm. The protein operates within protein biosynthesis; polypeptide chain elongation. Its function is as follows. Involved in peptide bond synthesis. Stimulates efficient translation and peptide-bond synthesis on native or reconstituted 70S ribosomes in vitro. Probably functions indirectly by altering the affinity of the ribosome for aminoacyl-tRNA, thus increasing their reactivity as acceptors for peptidyl transferase. In Rickettsia bellii (strain OSU 85-389), this protein is Elongation factor P.